The following is a 171-amino-acid chain: Ribulose bisphosphate carboxylase small subunit, chloroplastic (171 aa).

The transit peptide at 1-50 (MATGAGAGAATVVSAFTGLKSTAQFPSSFKMSNAAAEWEQKTTSNGGRVR) directs the protein to the chloroplast.

This sequence belongs to the RuBisCO small chain family. Heterohexadecamer of 8 large and 8 small subunits.

It localises to the plastid. Its subcellular location is the chloroplast. In terms of biological role, ruBisCO catalyzes two reactions: the carboxylation of D-ribulose 1,5-bisphosphate, the primary event in carbon dioxide fixation, as well as the oxidative fragmentation of the pentose substrate. Both reactions occur simultaneously and in competition at the same active site. Although the small subunit is not catalytic it is essential for maximal activity. The sequence is that of Ribulose bisphosphate carboxylase small subunit, chloroplastic from Pinus thunbergii (Japanese black pine).